The sequence spans 355 residues: Aminopeptidase N (355 aa).

Substrate-binding positions include Glu-156 and 290–294 (GAMEN). His-326 contacts Zn(2+). Glu-327 (proton acceptor) is an active-site residue. The Zn(2+) site is built by His-330 and Glu-349. Glu-349 provides a ligand contact to substrate.

This sequence belongs to the peptidase M1 family. It depends on Zn(2+) as a cofactor.

The protein localises to the cytoplasm. It carries out the reaction Release of an N-terminal amino acid, Xaa-|-Yaa- from a peptide, amide or arylamide. Xaa is preferably Ala, but may be most amino acids including Pro (slow action). When a terminal hydrophobic residue is followed by a prolyl residue, the two may be released as an intact Xaa-Pro dipeptide.. Its function is as follows. Aminopeptidase N is involved in the degradation of intracellular peptides generated by protein breakdown during normal growth as well as in response to nutrient starvation. This Acetobacter pasteurianus (Acetobacter turbidans) protein is Aminopeptidase N (pepN).